A 306-amino-acid chain; its full sequence is Elongation factor Ts (306 aa).

Residues 80 to 83 (TDFV) form an involved in Mg(2+) ion dislocation from EF-Tu region.

Belongs to the EF-Ts family.

The protein localises to the cytoplasm. In terms of biological role, associates with the EF-Tu.GDP complex and induces the exchange of GDP to GTP. It remains bound to the aminoacyl-tRNA.EF-Tu.GTP complex up to the GTP hydrolysis stage on the ribosome. The protein is Elongation factor Ts of Clostridium novyi (strain NT).